Consider the following 2531-residue polypeptide: Mediator of RNA polymerase II transcription subunit 12 (2531 aa).

Disordered regions lie at residues 1–41 (MLSM…VKHG), 204–283 (QNHD…GSVM), 584–604 (VSRRREEDQVEPRPPYEPKQD), and 742–762 (TTATKTSPPPPAPPPTTTHGF). Low complexity predominate over residues 210-247 (SSNGTTSGSLTAAGNGPASNGSTGTSSINSVTGSSAST). Basic and acidic residues predominate over residues 586–604 (RRREEDQVEPRPPYEPKQD). T745 bears the Phosphothreonine mark. Phosphoserine is present on residues S748 and S781. Positions 748–757 (SPPPPAPPPT) are enriched in pro residues. Basic and acidic residues predominate over residues 796–805 (EKGQQHEAPD). Positions 796-824 (EKGQQHEAPDSPKIGPPGDGETNPGGSIS) are disordered. A phosphoserine mark is found at S806 and S1356. T1360 is modified (phosphothreonine). Composition is skewed to polar residues over residues 1585-1595 (VSKSDCNSSGS) and 1901-1910 (TPSSVDQSPS). 4 disordered regions span residues 1585–1608 (VSKSDCNSSGSGDEREKSNSCHSS), 1898–2092 (KADT…NQYA), 2114–2218 (QALS…GMAP), and 2469–2508 (MGGGAGGGMGAGPQQGGGAVGGGAGGGMVPQQQSMNQQQT). The span at 1919-1933 (GRGKGTTTRKRKPKN) shows a compositional bias: basic residues. Composition is skewed to low complexity over residues 1938 to 2038 (PVVN…QQLN) and 2045 to 2055 (QPNPQMNFMQQ). Residues 2056 to 2066 (GPGGGGAGPQG) show a composition bias toward gly residues. 3 stretches are compositionally biased toward low complexity: residues 2067 to 2080 (MPGQQQQWHNAPQQ), 2121 to 2132 (RQRQPFQQQAQQ), and 2139 to 2205 (NPMQ…QQQQ). Residues 2469-2496 (MGGGAGGGMGAGPQQGGGAVGGGAGGGM) are compositionally biased toward gly residues. A compositionally biased stretch (low complexity) spans 2497-2507 (VPQQQSMNQQQ).

Belongs to the Mediator complex subunit 12 family. As to quaternary structure, component of the Cdk8 module of the Mediator complex, composed of CycC, Cdk8, kto and skd.

The protein resides in the nucleus. Component of the Mediator complex, a coactivator involved in regulated gene transcription of nearly all RNA polymerase II-dependent genes. Mediator functions as a bridge to convey information from gene-specific regulatory proteins to the basal RNA polymerase II transcription machinery. Mediator is recruited to promoters by direct interactions with regulatory proteins and serves as a scaffold for the assembly of a functional preinitiation complex with RNA polymerase II and the general transcription factors. Required for leg and eye development and macrochaete specification or differentiation. In Drosophila melanogaster (Fruit fly), this protein is Mediator of RNA polymerase II transcription subunit 12 (kto).